The primary structure comprises 180 residues: ATP synthase subunit delta (180 aa).

This sequence belongs to the ATPase delta chain family. As to quaternary structure, F-type ATPases have 2 components, F(1) - the catalytic core - and F(0) - the membrane proton channel. F(1) has five subunits: alpha(3), beta(3), gamma(1), delta(1), epsilon(1). F(0) has three main subunits: a(1), b(2) and c(10-14). The alpha and beta chains form an alternating ring which encloses part of the gamma chain. F(1) is attached to F(0) by a central stalk formed by the gamma and epsilon chains, while a peripheral stalk is formed by the delta and b chains.

It is found in the cell inner membrane. Functionally, f(1)F(0) ATP synthase produces ATP from ADP in the presence of a proton or sodium gradient. F-type ATPases consist of two structural domains, F(1) containing the extramembraneous catalytic core and F(0) containing the membrane proton channel, linked together by a central stalk and a peripheral stalk. During catalysis, ATP synthesis in the catalytic domain of F(1) is coupled via a rotary mechanism of the central stalk subunits to proton translocation. This protein is part of the stalk that links CF(0) to CF(1). It either transmits conformational changes from CF(0) to CF(1) or is implicated in proton conduction. This chain is ATP synthase subunit delta, found in Geotalea uraniireducens (strain Rf4) (Geobacter uraniireducens).